A 167-amino-acid polypeptide reads, in one-letter code: Probable tail fiber assembly protein (167 aa).

It belongs to the tfa family.

In terms of biological role, chaperone involved in tail fiber assembly. This is Probable tail fiber assembly protein (22) from Shigella phage SfV (Shigella flexneri bacteriophage V).